The following is a 199-amino-acid chain: Fe/S biogenesis protein NfuA (199 aa).

C151 and C154 together coordinate [4Fe-4S] cluster.

The protein belongs to the NfuA family. In terms of assembly, homodimer. The cofactor is [4Fe-4S] cluster.

Involved in iron-sulfur cluster biogenesis. Binds a 4Fe-4S cluster, can transfer this cluster to apoproteins, and thereby intervenes in the maturation of Fe/S proteins. Could also act as a scaffold/chaperone for damaged Fe/S proteins. The polypeptide is Fe/S biogenesis protein NfuA (Xylella fastidiosa (strain M12)).